A 282-amino-acid polypeptide reads, in one-letter code: MEMO1 family protein Msm_1438 (282 aa).

This sequence belongs to the MEMO1 family.

The polypeptide is MEMO1 family protein Msm_1438 (Methanobrevibacter smithii (strain ATCC 35061 / DSM 861 / OCM 144 / PS)).